Reading from the N-terminus, the 258-residue chain is Imidazole glycerol phosphate synthase subunit HisF (258 aa).

Catalysis depends on residues Asp-12 and Asp-131.

This sequence belongs to the HisA/HisF family. As to quaternary structure, heterodimer of HisH and HisF.

It localises to the cytoplasm. The enzyme catalyses 5-[(5-phospho-1-deoxy-D-ribulos-1-ylimino)methylamino]-1-(5-phospho-beta-D-ribosyl)imidazole-4-carboxamide + L-glutamine = D-erythro-1-(imidazol-4-yl)glycerol 3-phosphate + 5-amino-1-(5-phospho-beta-D-ribosyl)imidazole-4-carboxamide + L-glutamate + H(+). It participates in amino-acid biosynthesis; L-histidine biosynthesis; L-histidine from 5-phospho-alpha-D-ribose 1-diphosphate: step 5/9. Functionally, IGPS catalyzes the conversion of PRFAR and glutamine to IGP, AICAR and glutamate. The HisF subunit catalyzes the cyclization activity that produces IGP and AICAR from PRFAR using the ammonia provided by the HisH subunit. The polypeptide is Imidazole glycerol phosphate synthase subunit HisF (Nocardioides sp. (strain ATCC BAA-499 / JS614)).